The chain runs to 138 residues: Basic phospholipase A2 homolog Ts-K49a (138 aa).

The signal sequence occupies residues 1-16 (MRTLWIMAVLLLGVEG). Disulfide bonds link C42-C131, C44-C60, C59-C111, C65-C138, C66-C104, C73-C97, and C91-C102. The segment at 121–133 (KKKKINLKLFCKK) is important for membrane-damaging activities in eukaryotes and bacteria; heparin-binding.

In terms of tissue distribution, expressed by the venom gland.

The protein resides in the secreted. Its function is as follows. Snake venom phospholipase A2 homolog that lacks catalytic activity. It shows myotoxic and weak anticoagulant activities and induces local edema a few hours after injection (5-10 ug) in the hind paw. A model of myotoxic mechanism has been proposed: an apo Lys49-PLA2 is activated by the entrance of a hydrophobic molecule (e.g. fatty acid) at the hydrophobic channel of the protein leading to a reorientation of a monomer. This reorientation causes a transition between 'inactive' to 'active' states, causing alignment of C-terminal and membrane-docking sites (MDoS) side-by-side and putting the membrane-disruption sites (MDiS) in the same plane, exposed to solvent and in a symmetric position for both monomers. The MDoS region stabilizes the toxin on membrane by the interaction of charged residues with phospholipid head groups. Subsequently, the MDiS region destabilizes the membrane with penetration of hydrophobic residues. This insertion causes a disorganization of the membrane, allowing an uncontrolled influx of ions (i.e. calcium and sodium), and eventually triggering irreversible intracellular alterations and cell death. The protein is Basic phospholipase A2 homolog Ts-K49a of Trimeresurus stejnegeri (Chinese green tree viper).